Reading from the N-terminus, the 651-residue chain is Beta-glucuronidase (651 aa).

A signal peptide spans 1–22 (MSRGPAGAWVALGPLLWTCGLA). N-linked (GlcNAc...) asparagine glycans are attached at residues N172 and N419. E450 serves as the catalytic Proton donor. N-linked (GlcNAc...) asparagine glycosylation is present at N630.

The protein belongs to the glycosyl hydrolase 2 family. As to quaternary structure, homotetramer.

It is found in the lysosome. The enzyme catalyses a beta-D-glucuronoside + H2O = D-glucuronate + an alcohol. Its activity is regulated as follows. Inhibited by L-aspartic acid. Functionally, plays an important role in the degradation of dermatan and keratan sulfates. In Canis lupus familiaris (Dog), this protein is Beta-glucuronidase (GUSB).